The sequence spans 3491 residues: Erythronolide synthase EryA1 (3491 aa).

The segment at 1–484 (MSGPRSRTTS…TPRALAEALA (484 aa)) is loading domain. Residues 57–372 (VFVFPGQGAQ…AAQAFTGGVA (316 aa)) form an acyltransferase 1 region. The active-site Acyl-ester intermediate; for acyltransferase 1 activity is Ser-145. A disordered region spans residues 386-410 (PALCRSSRRPRRKTSRPSPASTGTR). A compositionally biased stretch (basic residues) spans 391-400 (SSRRPRRKTS). Positions 412–487 (RTCCERLLAV…ALAEALAAGT (76 aa)) constitute a Carrier 1 domain. Ser-447 is subject to O-(pantetheine 4'-phosphoryl)serine. The region spanning 504–928 (GEPVAVVAMA…GTNAHAIIEE (425 aa)) is the Ketosynthase family 3 (KS3) 1 domain. Module regions lie at residues 507–1958 (VAVV…AHLA) and 1982–3404 (IAIV…GFLD). The Acyl-thioester intermediate; for beta-ketoacyl synthase 1 activity role is filled by Cys-677. Residues His-812 and His-850 each act as for beta-ketoacyl synthase 1 activity in the active site. The segment at 1031–1352 (VFVFPGQGWQ…ALSRAFAAGV (322 aa)) is acyltransferase 2. The Acyl-ester intermediate; for acyltransferase 2 activity role is filled by Ser-1128. The beta-ketoacyl reductase 1 stretch occupies residues 1613 to 1790 (GTVLVTGGTG…ATAVAWGTWA (178 aa)). Residues 1621 to 1624 (TGGV), 1644 to 1647 (SRSG), 1673 to 1674 (DV), Lys-1723, and 1745 to 1746 (FS) each bind NADP(+). Tyr-1760 serves as the catalytic For beta-ketoacyl reductase 1 activity. The Carrier 2 domain occupies 1886-1961 (EALFELVRSH…TLAAHLAAEL (76 aa)). Position 1921 is an O-(pantetheine 4'-phosphoryl)serine (Ser-1921). Positions 1979–2402 (DEPIAIVGMA…GTNAHVIIAE (424 aa)) constitute a Ketosynthase family 3 (KS3) 2 domain. Residue Cys-2148 is the Acyl-thioester intermediate; for beta-ketoacyl synthase 2 activity of the active site. Catalysis depends on for beta-ketoacyl synthase 2 activity residues His-2283 and His-2323. An acyltransferase 3 region spans residues 2508-2827 (VFVFPGQGAQ…LADAHTRGVA (320 aa)). Ser-2598 serves as the catalytic Acyl-ester intermediate; for acyltransferase 3 activity. Residues 3057–3233 (GTILVTGGTA…ATSVAWGLWA (177 aa)) form a beta-ketoacyl reductase 2 region. NADP(+)-binding positions include 3065–3068 (TAGL), 3088–3091 (SRRG), 3117–3118 (DV), Lys-3168, and 3188–3189 (FS). Catalysis depends on Tyr-3203, which acts as the For beta-ketoacyl reductase 2 activity. In terms of domain architecture, Carrier 3 spans 3329–3407 (ERTAELVRLV…AVAGFLDAEL (79 aa)). O-(pantetheine 4'-phosphoryl)serine is present on Ser-3367. Positions 3456–3491 (QAADASGTGANPSGDDLGEAGVDELLEALGRELDGD) are disordered. Positions 3471 to 3481 (DLGEAGVDELL) are enriched in acidic residues.

In terms of assembly, homodimer. Erythronolide synthase is composed of EryAI, EryAII and EryAIII multimodular (2 modules) polypeptides each coding for a functional synthase subunit which participates in 2 of the six FAS-like elongation steps required for formation of the polyketide. Module 1, 2, 3, 4, 5, and 6 participating in biosynthesis steps 1, 2, 3, 4, 5, and 6, respectively. Requires pantetheine 4'-phosphate as cofactor.

It catalyses the reaction 6 (S)-methylmalonyl-CoA + propanoyl-CoA + 6 NADPH + 12 H(+) = 6-deoxyerythronolide B + 6 CO2 + 6 NADP(+) + 7 CoA + H2O. It participates in antibiotic biosynthesis; erythromycin biosynthesis. Involved in the biosynthesis of antibiotic erythromycin via the biosynthesis of its aglycone precursor, 6-deoxyerythronolide B (6-dEB). This Saccharopolyspora erythraea (Streptomyces erythraeus) protein is Erythronolide synthase EryA1 (eryA).